We begin with the raw amino-acid sequence, 262 residues long: Bacteriorhodopsin (262 aa).

Residues 1 to 13 (MLELLPTAVEGVS) constitute a propeptide that is removed on maturation. Gln14 carries the pyrrolidone carboxylic acid modification. At 14-22 (QAQITGRPE) the chain is on the extracellular side. The helical transmembrane segment at 23–42 (WIWLALGTALMGLGTLYFLV) threads the bilayer. Over 43 to 56 (KGMGVSDPDAKKFY) the chain is Cytoplasmic. The chain crosses the membrane as a helical span at residues 57 to 75 (AITTLVPAIAFTMYLSMLL). The Extracellular segment spans residues 76-92 (GYGLTMVPFGGEQNPIY). A helical membrane pass occupies residues 93-109 (WARYADWLFTTPLLLLD). At 110–120 (LALLVDADQGT) the chain is on the cytoplasmic side. Residues 121-140 (ILALVGADGIMIGTGLVGAL) form a helical membrane-spanning segment. Residues 141–147 (TKVYSYR) are Extracellular-facing. Residues 148-167 (FVWWAISTAAMLYILYVLFF) form a helical membrane-spanning segment. Over 168-185 (GFTSKAESMRPEVASTFK) the chain is Cytoplasmic. Residues 186-204 (VLRNVTVVLWSAYPVVWLI) form a helical membrane-spanning segment. The Extracellular portion of the chain corresponds to 205 to 216 (GSEGAGIVPLNI). A helical membrane pass occupies residues 217-236 (ETLLFMVLDVSAKVGFGLIL). Lys229 is subject to N6-(retinylidene)lysine. The Cytoplasmic segment spans residues 237–262 (LRSRAIFGEAEAPEPSAGDGAAATSD).

As to quaternary structure, homotrimer. The covalent binding of retinal to the apoprotein, bacterioopsin, generates bacteriorhodopsin.

The protein localises to the cell membrane. Light-driven proton pump. The polypeptide is Bacteriorhodopsin (bop) (Halobacterium salinarum (strain ATCC 700922 / JCM 11081 / NRC-1) (Halobacterium halobium)).